The following is a 441-amino-acid chain: Methylenetetrahydrofolate--tRNA-(uracil-5-)-methyltransferase TrmFO (441 aa).

Residue 10 to 15 (GAGLAG) participates in FAD binding.

Belongs to the MnmG family. TrmFO subfamily. The cofactor is FAD.

The protein resides in the cytoplasm. The enzyme catalyses uridine(54) in tRNA + (6R)-5,10-methylene-5,6,7,8-tetrahydrofolate + NADH + H(+) = 5-methyluridine(54) in tRNA + (6S)-5,6,7,8-tetrahydrofolate + NAD(+). It carries out the reaction uridine(54) in tRNA + (6R)-5,10-methylene-5,6,7,8-tetrahydrofolate + NADPH + H(+) = 5-methyluridine(54) in tRNA + (6S)-5,6,7,8-tetrahydrofolate + NADP(+). In terms of biological role, catalyzes the folate-dependent formation of 5-methyl-uridine at position 54 (M-5-U54) in all tRNAs. This is Methylenetetrahydrofolate--tRNA-(uracil-5-)-methyltransferase TrmFO from Desulforamulus reducens (strain ATCC BAA-1160 / DSM 100696 / MI-1) (Desulfotomaculum reducens).